The chain runs to 618 residues: Glycine--tRNA ligase 2 (618 aa).

Glu187 is a glycine binding site. ATP contacts are provided by residues 219–221 (RNE) and 230–231 (RV). A glycine-binding site is contributed by Glu238. An ATP-binding site is contributed by 347-348 (EC). 466–468 (EPS) is a glycine binding site. Arg473 is a binding site for ATP.

Belongs to the class-II aminoacyl-tRNA synthetase family. In terms of assembly, homodimer.

The protein localises to the cytoplasm. The catalysed reaction is tRNA(Gly) + glycine + ATP = glycyl-tRNA(Gly) + AMP + diphosphate. The enzyme catalyses 2 ATP + H(+) = P(1),P(4)-bis(5'-adenosyl) tetraphosphate + diphosphate. In terms of biological role, catalyzes the ATP-dependent ligation of glycine to the 3'-end of its cognate tRNA, via the formation of an aminoacyl-adenylate intermediate (Gly-AMP). Also produces diadenosine tetraphosphate (Ap4A), a universal pleiotropic signaling molecule needed for cell regulation pathways, by direct condensation of 2 ATPs. Thereby, may play a special role in Ap4A homeostasis. The polypeptide is Glycine--tRNA ligase 2 (GRS2) (Saccharomyces cerevisiae (strain ATCC 204508 / S288c) (Baker's yeast)).